Reading from the N-terminus, the 213-residue chain is N-(5'-phosphoribosyl)anthranilate isomerase (213 aa).

It belongs to the TrpF family.

The catalysed reaction is N-(5-phospho-beta-D-ribosyl)anthranilate = 1-(2-carboxyphenylamino)-1-deoxy-D-ribulose 5-phosphate. It participates in amino-acid biosynthesis; L-tryptophan biosynthesis; L-tryptophan from chorismate: step 3/5. In Methylibium petroleiphilum (strain ATCC BAA-1232 / LMG 22953 / PM1), this protein is N-(5'-phosphoribosyl)anthranilate isomerase.